The chain runs to 421 residues: Synaptotagmin-12 (421 aa).

At 1-18 (MAVDVTEYHLSVIKSPPG) the chain is on the vesicular side. A helical transmembrane segment spans residues 19-39 (WEVGVYAAGALALLGIAAVSL). Over 40-421 (WKLWTSGSFP…VSMWHPVRRN (382 aa)) the chain is Cytoplasmic. S97 is modified (phosphoserine; by PKA). A phosphoserine mark is found at S99 and S214. C2 domains follow at residues 152 to 272 (TLGQ…SGWL) and 283 to 416 (AVGE…SMWH).

The protein belongs to the synaptotagmin family. As to quaternary structure, homodimer. Can also form heterodimers. Interacts with SYT1. In terms of processing, phosphorylation of Ser-97 is required for mossy-fiber long-term potentiation. Expressed in the brain, specifically by neurons in the hippocampus, and in the adrenal medulla (at protein level).

It localises to the cytoplasmic vesicle. Its subcellular location is the secretory vesicle. The protein resides in the synaptic vesicle membrane. Its function is as follows. Synaptic vesicle phosphoprotein that enhances spontaneous neurotransmitter release but does not effect induced neurotransmitter release. Unlike other synaptotagmins, it does not bind Ca(2+) or phospholipids. Essential for mossy-fiber long-term potentiation in the hippocampus. This Mus musculus (Mouse) protein is Synaptotagmin-12.